The following is a 57-amino-acid chain: Potassium channel toxin MeuTXKalpha2 (57 aa).

An N-terminal signal peptide occupies residues 1 to 19; the sequence is MSRLYAIILIALVFNVIMT. The propeptide occupies 20–28; the sequence is IMPDMKVEA. Disulfide bonds link C31–C47, C34–C52, and C38–C54.

This sequence belongs to the short scorpion toxin superfamily. Potassium channel inhibitor family. Alpha-KTx 08 subfamily. In terms of tissue distribution, expressed by the venom gland.

Its subcellular location is the secreted. In terms of biological role, inhibits Kv1.1/KCNA1, Kv1.3/KCNA3 and Shaker potassium channels. The polypeptide is Potassium channel toxin MeuTXKalpha2 (Mesobuthus eupeus (Lesser Asian scorpion)).